Here is a 142-residue protein sequence, read N- to C-terminus: Large ribosomal subunit protein uL11 (142 aa).

The protein belongs to the universal ribosomal protein uL11 family. Part of the ribosomal stalk of the 50S ribosomal subunit. Interacts with L10 and the large rRNA to form the base of the stalk. L10 forms an elongated spine to which L12 dimers bind in a sequential fashion forming a multimeric L10(L12)X complex. One or more lysine residues are methylated.

Forms part of the ribosomal stalk which helps the ribosome interact with GTP-bound translation factors. The sequence is that of Large ribosomal subunit protein uL11 from Actinobacillus succinogenes (strain ATCC 55618 / DSM 22257 / CCUG 43843 / 130Z).